The primary structure comprises 142 residues: Hemoglobin subunit alpha (142 aa).

Residues 2–142 (VLSDADKTHV…VATVLTSKYR (141 aa)) enclose the Globin domain. A Phosphoserine modification is found at Ser-4. Lys-8 carries the N6-succinyllysine modification. Thr-9 carries the phosphothreonine modification. The residue at position 12 (Lys-12) is an N6-succinyllysine. Lys-17 carries the N6-acetyllysine; alternate modification. Position 17 is an N6-succinyllysine; alternate (Lys-17). Tyr-25 is modified (phosphotyrosine). A Phosphoserine modification is found at Ser-36. Lys-41 bears the N6-succinyllysine mark. The residue at position 50 (Ser-50) is a Phosphoserine. His-59 contributes to the O2 binding site. His-88 serves as a coordination point for heme b. A Phosphoserine modification is found at Ser-103. The residue at position 109 (Thr-109) is a Phosphothreonine. A phosphoserine mark is found at Ser-125 and Ser-132. 2 positions are modified to phosphothreonine: Thr-135 and Thr-138. Ser-139 bears the Phosphoserine mark.

This sequence belongs to the globin family. Heterotetramer of two alpha chains and two beta chains. In terms of tissue distribution, red blood cells.

Involved in oxygen transport from the lung to the various peripheral tissues. In terms of biological role, hemopressin acts as an antagonist peptide of the cannabinoid receptor CNR1. Hemopressin-binding efficiently blocks cannabinoid receptor CNR1 and subsequent signaling. This chain is Hemoglobin subunit alpha (HBA), found in Dasyurus viverrinus (Eastern quoll).